Reading from the N-terminus, the 1019-residue chain is Phosphatidylinositol 3,4,5-trisphosphate 5-phosphatase 1 (1019 aa).

The SH2 domain occupies 5–101; that stretch reads WYHGNITRSK…GLVTHLQYPI (97 aa). Over residues 103–116 the composition is skewed to acidic residues; sequence KEEEGPEEPDEEQE. 2 disordered regions span residues 103-133 and 909-1019; these read KEEE…TPPS and ETQN…PPTA. The short motif at 120–125 is the SH3-binding 1 element; it reads PNVPPR. Polar residues-rich tracts occupy residues 909–931 and 958–980; these read ETQN…KQSP and PITS…TNRT. Residues 966–971 carry the SH3-binding 2 motif; sequence TLSTQK. The NPXY motif motif lies at 1004-1007; sequence NPLY. The residue at position 1007 (Y1007) is a Phosphotyrosine. A compositionally biased stretch (polar residues) spans 1010 to 1019; it reads VNNTLYPPTA.

The protein belongs to the inositol 1,4,5-trisphosphate 5-phosphatase family. Post-translationally, tyrosine phosphorylated by the members of the SRC family after exposure to a diverse array of extracellular stimuli.

The protein localises to the cytoplasm. It is found in the cell membrane. It localises to the membrane raft. Its subcellular location is the cytoskeleton. It carries out the reaction a 1,2-diacyl-sn-glycero-3-phospho-(1D-myo-inositol-3,4,5-trisphosphate) + H2O = a 1,2-diacyl-sn-glycero-3-phospho-(1D-myo-inositol-3,4-bisphosphate) + phosphate. It catalyses the reaction 1D-myo-inositol 1,3,4,5-tetrakisphosphate + H2O = 1D-myo-inositol 1,3,4-trisphosphate + phosphate. The catalysed reaction is a 1,2-diacyl-sn-glycero-3-phospho-(1D-myo-inositol-4,5-bisphosphate) + H2O = a 1,2-diacyl-sn-glycero-3-phospho-(1D-myo-inositol 4-phosphate) + phosphate. In terms of biological role, phosphatidylinositol (PtdIns) phosphatase that specifically hydrolyzes the 5-phosphate of phosphatidylinositol-3,4,5-trisphosphate (PtdIns(3,4,5)P3) to produce PtdIns(3,4)P2, thereby negatively regulating the PI3K (phosphoinositide 3-kinase) pathways. Able also to hydrolyzes the 5-phosphate of phosphatidylinositol-4,5-bisphosphate (PtdIns(4,5)P3) and inositol 1,3,4,5-tetrakisphosphate. Acts as a negative regulator of B-cell antigen receptor signaling. Mediates signaling from the FC-gamma-RIIB receptor (FCGR2B), playing a central role in terminating signal transduction from activating immune/hematopoietic cell receptor systems. Acts as a negative regulator of myeloid cell proliferation/survival and chemotaxis, mast cell degranulation, immune cells homeostasis, integrin alpha-IIb/beta-3 signaling in platelets and JNK signaling in B-cells. The sequence is that of Phosphatidylinositol 3,4,5-trisphosphate 5-phosphatase 1 (inpp5d) from Xenopus laevis (African clawed frog).